The following is a 436-amino-acid chain: Trigger factor (436 aa).

A PPIase FKBP-type domain is found at G163 to P248.

This sequence belongs to the FKBP-type PPIase family. Tig subfamily.

It is found in the cytoplasm. It catalyses the reaction [protein]-peptidylproline (omega=180) = [protein]-peptidylproline (omega=0). Its function is as follows. Involved in protein export. Acts as a chaperone by maintaining the newly synthesized protein in an open conformation. Functions as a peptidyl-prolyl cis-trans isomerase. This chain is Trigger factor, found in Delftia acidovorans (strain DSM 14801 / SPH-1).